A 100-amino-acid polypeptide reads, in one-letter code: Large ribosomal subunit protein uL23 (100 aa).

This sequence belongs to the universal ribosomal protein uL23 family. As to quaternary structure, part of the 50S ribosomal subunit. Contacts protein L29, and trigger factor when it is bound to the ribosome.

In terms of biological role, one of the early assembly proteins it binds 23S rRNA. One of the proteins that surrounds the polypeptide exit tunnel on the outside of the ribosome. Forms the main docking site for trigger factor binding to the ribosome. The polypeptide is Large ribosomal subunit protein uL23 (Xylella fastidiosa (strain M23)).